A 331-amino-acid chain; its full sequence is Lactamase-like protein nscB (331 aa).

Positions 106, 108, 110, and 111 each coordinate Zn(2+). Aspartate 110 functions as the Proton donor/acceptor in the catalytic mechanism.

Belongs to the metallo-beta-lactamase superfamily. Zn(2+) is required as a cofactor.

Its pathway is secondary metabolite biosynthesis. Lactamase-like protein; part of the gene cluster that mediates the biosynthesis of neosartoricin B, a prenylated anthracenone that probably exhibits T-cell antiproliferative activity, suggestive of a physiological role as an immunosuppressive agent. The non-reducing polyketide synthase nscA probably synthesizes and cyclizes the decaketide backbone. The hydrolase nscB then mediates the product release through hydrolysis followed by spontaneous decarboxylation. The prenyltransferase nscD catalyzes the addition of the dimethylallyl group to the aromatic C5. The FAD-dependent monooxygenase nscC is then responsible for the stereospecific hydroxylation at C2. Neosartoricin B can be converted into two additional compounds neosartoricins C and D. Neosartoricin C is a spirocyclic compound that is cyclized through the attack of C3 hydroxyl on C14, followed by dehydration. On the other hand, neosartoricin D is a further cyclized compound in which attack of C2 on C14 in neosartoricin C results in the formation of the acetal-containing dioxabicyclo-octanone ring. Both of these compounds are novel and possibly represent related metabolites of the gene cluster. The protein is Lactamase-like protein nscB of Trichophyton equinum (strain ATCC MYA-4606 / CBS 127.97) (Horse ringworm fungus).